The sequence spans 345 residues: tRNA N6-adenosine threonylcarbamoyltransferase (345 aa).

Residues H111 and H115 each contribute to the Fe cation site. Residues 134–138, D167, G180, and N277 each bind substrate; that span reads LVSGG. A Fe cation-binding site is contributed by D305.

Belongs to the KAE1 / TsaD family. Fe(2+) serves as cofactor.

It is found in the cytoplasm. The enzyme catalyses L-threonylcarbamoyladenylate + adenosine(37) in tRNA = N(6)-L-threonylcarbamoyladenosine(37) in tRNA + AMP + H(+). Functionally, required for the formation of a threonylcarbamoyl group on adenosine at position 37 (t(6)A37) in tRNAs that read codons beginning with adenine. Is involved in the transfer of the threonylcarbamoyl moiety of threonylcarbamoyl-AMP (TC-AMP) to the N6 group of A37, together with TsaE and TsaB. TsaD likely plays a direct catalytic role in this reaction. This Laribacter hongkongensis (strain HLHK9) protein is tRNA N6-adenosine threonylcarbamoyltransferase.